Here is a 238-residue protein sequence, read N- to C-terminus: Transcription factor PCL1 (238 aa).

Residues 71 to 90 show a composition bias toward low complexity; that stretch reads RLRRASSSSSSSFPAFASKG. The segment at 71–119 is disordered; that stretch reads RLRRASSSSSSSFPAFASKGAGTGADEAESGGGADGGNGNTNNSSSKRA. Residues 100 to 109 are compositionally biased toward gly residues; it reads SGGGADGGNG. Positions 115–174 form a DNA-binding region, myb-like GARP; sequence SSKRARLVWTPQLHKRFVEVVAHLGMKNAVPKTIMQLMNVEGLTRENVASHLQKYRLYVK.

It is found in the nucleus. Functionally, transcription factor that is essential for the generation of the circadian clock oscillation. Binds to specific sites on CCA1 promoter leading to CCA1 activation. The chain is Transcription factor PCL1 (PCL1) from Oryza sativa subsp. japonica (Rice).